The primary structure comprises 197 residues: Phosphoheptose isomerase (197 aa).

The 161-residue stretch at 37–197 (MLQCLMNDGK…CIDSVLLEGM (161 aa)) folds into the SIS domain. Position 52–54 (52–54 (NGG)) interacts with substrate. Histidine 61 and glutamate 65 together coordinate Zn(2+). Substrate is bound by residues glutamate 65, 94–95 (ND), 120–122 (STS), serine 125, and glutamine 175. 2 residues coordinate Zn(2+): glutamine 175 and histidine 183.

This sequence belongs to the SIS family. GmhA subfamily. Homotetramer. Requires Zn(2+) as cofactor.

The protein resides in the cytoplasm. The enzyme catalyses 2 D-sedoheptulose 7-phosphate = D-glycero-alpha-D-manno-heptose 7-phosphate + D-glycero-beta-D-manno-heptose 7-phosphate. It functions in the pathway carbohydrate biosynthesis; D-glycero-D-manno-heptose 7-phosphate biosynthesis; D-glycero-alpha-D-manno-heptose 7-phosphate and D-glycero-beta-D-manno-heptose 7-phosphate from sedoheptulose 7-phosphate: step 1/1. Catalyzes the isomerization of sedoheptulose 7-phosphate in D-glycero-D-manno-heptose 7-phosphate. The chain is Phosphoheptose isomerase from Neisseria meningitidis serogroup C / serotype 2a (strain ATCC 700532 / DSM 15464 / FAM18).